The primary structure comprises 173 residues: Shikimate kinase 1 (173 aa).

14-19 (GAGKST) serves as a coordination point for ATP. Residue serine 18 coordinates Mg(2+). Aspartate 36, arginine 60, and glycine 82 together coordinate substrate. Arginine 120 lines the ATP pocket. Arginine 140 provides a ligand contact to substrate. ATP is bound at residue glutamine 157.

This sequence belongs to the shikimate kinase family. Monomer. The cofactor is Mg(2+).

The protein resides in the cytoplasm. It carries out the reaction shikimate + ATP = 3-phosphoshikimate + ADP + H(+). Its pathway is metabolic intermediate biosynthesis; chorismate biosynthesis; chorismate from D-erythrose 4-phosphate and phosphoenolpyruvate: step 5/7. Its function is as follows. Catalyzes the specific phosphorylation of the 3-hydroxyl group of shikimic acid using ATP as a cosubstrate. The chain is Shikimate kinase 1 from Salmonella typhimurium (strain LT2 / SGSC1412 / ATCC 700720).